The following is a 576-amino-acid chain: MNIRNDVQKALQHLFGRTAVPQETSKVNEALNGEKRLLLGKVLRLLGDQHALIQVGNQTVQGKLETQLRPQAYYWFSYEKKTAEQTGRLQVVQSFDQNPKTIQDAAGKLLNAISVKTSNAALMMTGAMLKSKTPVTENDIKTAVRWMDTLPSQDTKKAVETVLFALKRDLPIHSEILNGVHAVKSPVPLHQHVSQLLQAIDQNPQQSQMMSKLKEAVTVLLNSEIDVHAERLIDKLISLTDNTKAPSPTNTAGSRELSTPAGSPGKASLPIANHTAEQGSIQEEPVKTAADIPIKEARQLLVKLTESAEKNSLQIVKEAANWIKAAASSGDSKSLAASAVLQAAQVTDQEAEVFLKAVQQTAPHLADKADVLSFLSKVKTAIGARDEVAFIKAFEQGSAVTSGEMQSIKLALSALRASHEVAEPVKQEADQLFHKLNGQLFMQQDHPSYSQIVMSFPMFSKSGVQDMTVLFKGKKEADGKLDPSHCRLLFLLQLDTLKETVVDCLVQQKVMTITIETDFELQAAIDPMVPALKQGLKEMGYSLSGVNAKKRVHTEEKASIDQYITSISDQEVDVKI.

Residues 241–261 are compositionally biased toward polar residues; sequence DNTKAPSPTNTAGSRELSTPA. A disordered region spans residues 241-270; that stretch reads DNTKAPSPTNTAGSRELSTPAGSPGKASLP.

This is an uncharacterized protein from Bacillus subtilis (strain 168).